The sequence spans 546 residues: Parathyroid hormone 2 receptor (546 aa).

An N-terminal signal peptide occupies residues 1–24; it reads MAWLETFTYICGWLILSSCLLVRA. Over 27–143 the chain is Extracellular; it reads DSDGTITIEE…GKQEFFESLY (117 aa). 4 N-linked (GlcNAc...) asparagine glycosylation sites follow: N51, N106, N116, and N121. A helical membrane pass occupies residues 144–167; it reads ILYTVGYSISFGSLAVAILIIGYF. The Cytoplasmic portion of the chain corresponds to 168-174; sequence RRLHCTR. A helical membrane pass occupies residues 175–194; sequence NYIHLHLFVSFMLRAMSIFV. Residues 195–235 lie on the Extracellular side of the membrane; that stretch reads KDRVAQAHLGVEALQSLVMQGDLQNFIGGPSVDKSQYVGCK. Residues 236 to 258 traverse the membrane as a helical segment; the sequence is IAVVMFIYFLATNYYWILVEGLY. The Cytoplasmic segment spans residues 259-273; that stretch reads LHNLIFVSFFSDTKY. A helical membrane pass occupies residues 274–295; it reads LWGFISIGWGFPAVFVVAWAVA. Residues 296–313 are Extracellular-facing; sequence RATLADTRCWELSAGDRW. Residues 314-334 traverse the membrane as a helical segment; the sequence is IYQAPILAAIGLNFILFLNTV. Topologically, residues 335–361 are cytoplasmic; that stretch reads RVLATKIWETNAVGHDMRKQYRKLAKS. A helical transmembrane segment spans residues 362–380; it reads TLVLVLVFGVHYIVFVCQP. Over 381-391 the chain is Extracellular; the sequence is HSFSGLWWEIR. Residues 392–414 form a helical membrane-spanning segment; sequence MHCELFFNSFQGFFVSIVYCYCN. Residues 415–546 are Cytoplasmic-facing; it reads GEVQAEVKKM…EGCKGETHPI (132 aa). The tract at residues 497 to 546 is disordered; it reads SEQDCQTHSPPEETKEGHRRQGDDSPVMESSRPVAFTLDTEGCKGETHPI. Basic and acidic residues-rich tracts occupy residues 506-519 and 537-546; these read PPEETKEGHRRQGD and EGCKGETHPI.

This sequence belongs to the G-protein coupled receptor 2 family. As to quaternary structure, binds to TIPF39/TIP39.

The protein resides in the cell membrane. In terms of biological role, this is a specific receptor for parathyroid hormone. The activity of this receptor is mediated by G proteins which activate adenylyl cyclase. PTH2R may be responsible for PTH effects in a number of physiological systems. It may play a significant role in pancreatic function. PTH2R presence in neurons indicates that it may function as a neurotransmitter receptor. This is Parathyroid hormone 2 receptor (Pth2r) from Mus musculus (Mouse).